We begin with the raw amino-acid sequence, 710 residues long: Subtilisin-like protease SBT4.8 (710 aa).

A signal peptide spans 1–23; sequence MVKRASFCLLSCLIILFLSSVSA. Positions 24–111 are cleaved as a propeptide — activation peptide; that stretch reads IIYDPQDKQV…VFRSKNYKLQ (88 aa). The Inhibitor I9 domain maps to 33–110; that stretch reads VYVVYMGSLP…SVFRSKNYKL (78 aa). Residues 115–559 enclose the Peptidase S8 domain; the sequence is SWDFMGMKEG…AGHVDPIAAI (445 aa). Residue Asp143 is the Charge relay system of the active site. N-linked (GlcNAc...) asparagine glycosylation is present at Asn174. The Charge relay system role is filled by His198. Residues Asn221, Asn364, and Asn419 are each glycosylated (N-linked (GlcNAc...) asparagine). In terms of domain architecture, PA spans 354–414; sequence KYPLEYGDYL…VLSQDDFDSL (61 aa). Ser498 acts as the Charge relay system in catalysis. N-linked (GlcNAc...) asparagine glycans are attached at residues Asn535, Asn568, Asn580, Asn618, and Asn636.

It belongs to the peptidase S8 family. Post-translationally, the C-terminal propeptide is autocleaved.

Its subcellular location is the secreted. The sequence is that of Subtilisin-like protease SBT4.8 from Arabidopsis thaliana (Mouse-ear cress).